The following is a 257-amino-acid chain: Putative pentatricopeptide repeat-containing protein At1g43010 (257 aa).

PPR repeat units lie at residues 133 to 168 and 169 to 203; these read KMRD…GFLL and KPYL…NMEV.

The protein belongs to the PPR family. P subfamily.

This chain is Putative pentatricopeptide repeat-containing protein At1g43010, found in Arabidopsis thaliana (Mouse-ear cress).